A 521-amino-acid chain; its full sequence is MNNIPDDFKKIASSSRLPRKYCSSESSLSDDDGHEIEHVLKHGAPEEALTPDTERMVVLGQDVVQSAPASLVPGGNLSWMSKIKSAGASMMGSIRPSSSSQDVHSTGEIEKHSKKKWKARLWSTWNNIKYSSTWMSDRSDEYGGENDVVFLGRRYSTSVDESGLRSGFENFCSDYYSRLWITYRTDFPALLDTDTTTDCGWGCMIRTTQMMVAQAIMVNRFGRDWRFTRRKRSHVAAHGDEDDFDREKIQEWMILKLFEDKPTAPLGIHKMVGIAAMGKGKKAVGSWYSPSEAVFIMKKALTESSSPLTGNTAMLLSIDGRVHIRDIEVETKNWMKKLILVIVVRLGAAELNPIYVPHLMRLFAMESCLGITGGRPDHSSWFVGYYGDQIIYLDPHVAHEYIPIDINPNTNVVDSDSKKAKKCPEKSYHCRLLSKMHFFDMDPSCALCFQFESREQFDNDMRQLNLSQFIDIDQGEEHGMKRVRDPMFSVVYGERRQPPSYEREVSETEQAQADKHGFEML.

Positions 90–100 are enriched in low complexity; it reads MMGSIRPSSSS. The segment at 90-109 is disordered; it reads MMGSIRPSSSSQDVHSTGEI. Cys-203 (nucleophile) is an active-site residue. Catalysis depends on residues Asp-394 and His-396. A disordered region spans residues 499 to 521; that stretch reads PSYEREVSETEQAQADKHGFEML.

The protein belongs to the peptidase C54 family.

The protein localises to the cytoplasm. It carries out the reaction [protein]-C-terminal L-amino acid-glycyl-phosphatidylethanolamide + H2O = [protein]-C-terminal L-amino acid-glycine + a 1,2-diacyl-sn-glycero-3-phosphoethanolamine. Functionally, cysteine protease required for autophagy. Cleaves the C-terminal amino acid of ATG8 family proteins lgg-1, to reveal a C-terminal glycine. Exposure of the glycine at the C-terminus is essential for ATG8 proteins conjugation to phosphatidylethanolamine (PE) and insertion to membranes, which is necessary for autophagy. Its cleavage activity is functionally redundant to atg-4.1, but it cleaves lgg-1 precursors less efficiently than atg-4.1. In contrast to atg-4.1, plays a more significant role in the later phases of autophagy and in addition has a role in autophagosome maturation. Acts redundantly with atg-4.1 to promote the lgg-1 delipidation to release the protein from membranes, which facilitates multiple events during macroautophagy. Regulates the accumulation of autophagic structures in neurons and is specifically, required for the maturation and elimination of autophagosomes from the synaptic region of AIY interneurons. The sequence is that of Cysteine protease atg-4.2 from Caenorhabditis elegans.